A 417-amino-acid chain; its full sequence is Multifunctional CCA protein (417 aa).

Residues Gly8 and Arg11 each coordinate ATP. Positions 8 and 11 each coordinate CTP. Asp21 and Asp23 together coordinate Mg(2+). The ATP site is built by Arg91, Arg143, and Arg146. CTP contacts are provided by Arg91, Arg143, and Arg146. In terms of domain architecture, HD spans 232–333 (TGVHVMMVVD…VRLFERSDAL (102 aa)).

It belongs to the tRNA nucleotidyltransferase/poly(A) polymerase family. Bacterial CCA-adding enzyme type 1 subfamily. As to quaternary structure, monomer. Can also form homodimers and oligomers. The cofactor is Mg(2+). Requires Ni(2+) as cofactor.

The enzyme catalyses a tRNA precursor + 2 CTP + ATP = a tRNA with a 3' CCA end + 3 diphosphate. It catalyses the reaction a tRNA with a 3' CCA end + 2 CTP + ATP = a tRNA with a 3' CCACCA end + 3 diphosphate. Functionally, catalyzes the addition and repair of the essential 3'-terminal CCA sequence in tRNAs without using a nucleic acid template. Adds these three nucleotides in the order of C, C, and A to the tRNA nucleotide-73, using CTP and ATP as substrates and producing inorganic pyrophosphate. tRNA 3'-terminal CCA addition is required both for tRNA processing and repair. Also involved in tRNA surveillance by mediating tandem CCA addition to generate a CCACCA at the 3' terminus of unstable tRNAs. While stable tRNAs receive only 3'-terminal CCA, unstable tRNAs are marked with CCACCA and rapidly degraded. This Paraburkholderia phymatum (strain DSM 17167 / CIP 108236 / LMG 21445 / STM815) (Burkholderia phymatum) protein is Multifunctional CCA protein.